The primary structure comprises 183 residues: A-type ATP synthase subunit E (183 aa).

It belongs to the V-ATPase E subunit family. In terms of assembly, has multiple subunits with at least A(3), B(3), C, D, E, F, H, I and proteolipid K(x).

It is found in the cell membrane. Component of the A-type ATP synthase that produces ATP from ADP in the presence of a proton gradient across the membrane. This is A-type ATP synthase subunit E from Methanococcoides burtonii (strain DSM 6242 / NBRC 107633 / OCM 468 / ACE-M).